We begin with the raw amino-acid sequence, 150 residues long: Large ribosomal subunit protein bL9 (150 aa).

Belongs to the bacterial ribosomal protein bL9 family.

In terms of biological role, binds to the 23S rRNA. This chain is Large ribosomal subunit protein bL9, found in Verminephrobacter eiseniae (strain EF01-2).